Reading from the N-terminus, the 546-residue chain is MAAKDVVFGGEARARMVEGVNILANAVKVTLGPKGRNVVLERSFGAPTVTKDGVSVAKEIELKDKLQNMGAQLVKEVASKTNDIAGDGTTTATVLAQAIVREGSKYVAAGLNPMDLKRGIDKAVVALVEELKKASKATTTSKEIAQVGSISANSDESVGKIIADAMDKVGKEGVITVEDGKSLENELDVVEGMQFDRGYLSPYFINNPEKQSAILDNPFVLLFDKKISNIRDLLPTLEQVAKASRPLLIIAEEVDGEALATLVVNTIRGILKVVAVKAPGFGDRRKAMLEDIAILTGGKVIAEEVGLTLEKVTLADLGQAKRIEVGKENTTIIDGAGAAADIEARVKQIRIQIEEATSDYDREKLQERVAKLAGGVAVIKVGAATEVEMKEKKARVEDALHATRAAVEEGIVAGGGVALLRAKQAVGNLSTGNPEQDAGIKLVLKAVEAPLREIVANAGGEPSVVVNEVLNGKGNYGFNAANDTYGDMLEMGILDPTKVTRTALQNAASVASLLLTTEAMVAEAPKDESAAPAMPGGMGGMGDMGM.

Residues 30–33, K51, 87–91, G415, 479–481, and D495 each bind ATP; these read TLGP, DGTTT, and NAA. The tract at residues 527 to 546 is disordered; it reads DESAAPAMPGGMGGMGDMGM. Positions 536–546 are enriched in gly residues; it reads GGMGGMGDMGM.

The protein belongs to the chaperonin (HSP60) family. In terms of assembly, forms a cylinder of 14 subunits composed of two heptameric rings stacked back-to-back. Interacts with the co-chaperonin GroES.

The protein resides in the cytoplasm. It catalyses the reaction ATP + H2O + a folded polypeptide = ADP + phosphate + an unfolded polypeptide.. In terms of biological role, together with its co-chaperonin GroES, plays an essential role in assisting protein folding. The GroEL-GroES system forms a nano-cage that allows encapsulation of the non-native substrate proteins and provides a physical environment optimized to promote and accelerate protein folding. This chain is Chaperonin GroEL, found in Acidovorax ebreus (strain TPSY) (Diaphorobacter sp. (strain TPSY)).